The chain runs to 711 residues: Long-chain-fatty-acid--CoA ligase 4 (711 aa).

The chain crosses the membrane as a helical; Signal-anchor for type III membrane protein span at residues 8–28 (LTIILLPVHLLITIYSALIFI). Over 29–711 (PWYFLTNAKK…KDIERMYGGK (683 aa)) the chain is Cytoplasmic. Serine 447 is modified (phosphoserine).

This sequence belongs to the ATP-dependent AMP-binding enzyme family. Requires Mg(2+) as cofactor. In terms of tissue distribution, abundant in steroidogenic tissues, also found in the kidney, brain and liver.

Its subcellular location is the mitochondrion outer membrane. It localises to the peroxisome membrane. The protein resides in the microsome membrane. The protein localises to the endoplasmic reticulum membrane. It is found in the cell membrane. It carries out the reaction a long-chain fatty acid + ATP + CoA = a long-chain fatty acyl-CoA + AMP + diphosphate. It catalyses the reaction (5Z,8Z,11Z,14Z)-eicosatetraenoate + ATP + CoA = (5Z,8Z,11Z,14Z)-eicosatetraenoyl-CoA + AMP + diphosphate. The enzyme catalyses 15-hydroxy-(5Z,8Z,11Z,13E)-eicosatetraenoate + ATP + CoA = 15-hydroxy-(5Z,8Z,11Z,13E)-eicosatetraenoyl-CoA + AMP + diphosphate. The catalysed reaction is 12-hydroxy-(5Z,8Z,10E,14Z)-eicosatetraenoate + ATP + CoA = 12-hydroxy-(5Z,8Z,10E,14Z)-eicosatetraenoyl-CoA + AMP + diphosphate. It carries out the reaction 5-hydroxy-(6E,8Z,11Z,14Z)-eicosatetraenoate + ATP + CoA = 5-hydroxy-(6E,8Z,11Z,14Z)-eicosatetraenoyl-CoA + AMP + diphosphate. It catalyses the reaction 5,6-epoxy-(8Z,11Z,14Z)-eicosatrienoate + ATP + CoA = 5,6-epoxy-(8Z,11Z,14Z)-eicosatrienoyl-CoA + AMP + diphosphate. The enzyme catalyses 14,15-epoxy-(5Z,8Z,11Z)-eicosatrienoate + ATP + CoA = 14,15-epoxy-(5Z,8Z,11Z)-eicosatrienoyl-CoA + AMP + diphosphate. The catalysed reaction is 11,12-epoxy-(5Z,8Z,14Z)-eicosatrienoate + ATP + CoA = 11,12-epoxy-(5Z,8Z,14Z)-eicosatrienoyl-CoA + AMP + diphosphate. It carries out the reaction 8,9-epoxy-(5Z,11Z,14Z)-eicosatrienoate + ATP + CoA = 8,9-epoxy-(5Z,11Z,14Z)-eicosatrienoyl-CoA + AMP + diphosphate. It catalyses the reaction hexadecanoate + ATP + CoA = hexadecanoyl-CoA + AMP + diphosphate. The enzyme catalyses (E)-hexadec-2-enoate + ATP + CoA = (2E)-hexadecenoyl-CoA + AMP + diphosphate. Both triacsin C and rosiglitazone inhibit arachidonoyl-CoA ligase activity. In terms of biological role, catalyzes the conversion of long-chain fatty acids to their active form acyl-CoA for both synthesis of cellular lipids, and degradation via beta-oxidation. Preferentially activates arachidonate and eicosapentaenoate as substrates. Preferentially activates 8,9-EET &gt; 14,15-EET &gt; 5,6-EET &gt; 11,12-EET. Modulates glucose-stimulated insulin secretion by regulating the levels of unesterified EETs. Modulates prostaglandin E2 secretion. The chain is Long-chain-fatty-acid--CoA ligase 4 (Acsl4) from Mus musculus (Mouse).